The following is a 353-amino-acid chain: Quinolinate synthase (353 aa).

Iminosuccinate contacts are provided by H47 and S68. C113 is a [4Fe-4S] cluster binding site. Residues 139-141 (YAN) and S156 contribute to the iminosuccinate site. C200 is a binding site for [4Fe-4S] cluster. Iminosuccinate contacts are provided by residues 226 to 228 (HPE) and T243. C297 contributes to the [4Fe-4S] cluster binding site.

The protein belongs to the quinolinate synthase family. Type 1 subfamily. [4Fe-4S] cluster is required as a cofactor.

The protein resides in the cytoplasm. The catalysed reaction is iminosuccinate + dihydroxyacetone phosphate = quinolinate + phosphate + 2 H2O + H(+). Its pathway is cofactor biosynthesis; NAD(+) biosynthesis; quinolinate from iminoaspartate: step 1/1. Catalyzes the condensation of iminoaspartate with dihydroxyacetone phosphate to form quinolinate. The polypeptide is Quinolinate synthase (Yersinia pseudotuberculosis serotype O:3 (strain YPIII)).